The sequence spans 500 residues: Glutamate--tRNA ligase (500 aa).

Residues Pro12–Asn22 carry the 'HIGH' region motif. Residues Lys259–Arg263 carry the 'KMSKS' region motif. Lys262 serves as a coordination point for ATP.

It belongs to the class-I aminoacyl-tRNA synthetase family. Glutamate--tRNA ligase type 1 subfamily. Monomer.

Its subcellular location is the cytoplasm. The enzyme catalyses tRNA(Glu) + L-glutamate + ATP = L-glutamyl-tRNA(Glu) + AMP + diphosphate. Catalyzes the attachment of glutamate to tRNA(Glu) in a two-step reaction: glutamate is first activated by ATP to form Glu-AMP and then transferred to the acceptor end of tRNA(Glu). This chain is Glutamate--tRNA ligase, found in Lactobacillus delbrueckii subsp. bulgaricus (strain ATCC 11842 / DSM 20081 / BCRC 10696 / JCM 1002 / NBRC 13953 / NCIMB 11778 / NCTC 12712 / WDCM 00102 / Lb 14).